The primary structure comprises 514 residues: Na(+)/H(+) antiporter NhaB (514 aa).

12 helical membrane-spanning segments follow: residues 23-43 (LALL…PFIA), 52-72 (IFTL…LLAI), 97-117 (LLLM…LFIF), 120-140 (LLLS…AAAF), 144-164 (FLDA…FYGI), 202-222 (LMMH…VGEP), 238-258 (FFLR…LTCL), 303-323 (ALIG…VGLI), 353-373 (FTAL…QSLF), 391-411 (LFYL…VGTI), 447-467 (ATPN…APLI), and 475-495 (VWMA…CVEF).

This sequence belongs to the NhaB Na(+)/H(+) (TC 2.A.34) antiporter family.

The protein resides in the cell inner membrane. It catalyses the reaction 2 Na(+)(in) + 3 H(+)(out) = 2 Na(+)(out) + 3 H(+)(in). In terms of biological role, na(+)/H(+) antiporter that extrudes sodium in exchange for external protons. The polypeptide is Na(+)/H(+) antiporter NhaB (Escherichia fergusonii (strain ATCC 35469 / DSM 13698 / CCUG 18766 / IAM 14443 / JCM 21226 / LMG 7866 / NBRC 102419 / NCTC 12128 / CDC 0568-73)).